Here is a 250-residue protein sequence, read N- to C-terminus: Doublesex- and mab-3-related transcription factor dmd-3 (250 aa).

The DM 1 DNA-binding region spans 19–68 (CQRCLNHGLREKRKNHKLSCTFRFCQCSNCIMVERRRQLNSRLMQIDGSR). Residues 90–100 (CTSQSETTNES) show a composition bias toward polar residues. The interval 90–115 (CTSQSETTNESSGEDKDDGKPKERRP) is disordered. Residues 102-115 (GEDKDDGKPKERRP) are compositionally biased toward basic and acidic residues. The DM 2 DNA-binding region spans 117–164 (CQRCAQHSVVNRLKGHKRACPFRDCFCAKCQVVVERQKLMADQIKLRR). Residues 166–201 (QKREKNNLNSEREAPIAHSMTPSPIDTVTTTTTPTS) form a disordered region. Residues 169-180 (EKNNLNSEREAP) show a composition bias toward basic and acidic residues. Low complexity predominate over residues 186-201 (TPSPIDTVTTTTTPTS).

It belongs to the DMRT family. In males, expressed in the tail tip. Specifically, expressed in 15 male-specific muscles of the tail tip called the diagonal muscles, and also in core body muscles of both males and hermaphrodites. In males, expressed in ray A-neurons. In males, expressed in PHC sensory neurons. In males, it is also expressed in the hindgut, B lineage and somatic gonad. In hermaphrodites, expressed in the anchor cell only.

It localises to the nucleus. The protein localises to the perikaryon. In terms of biological role, transcriptional activator which promotes male-specific development. Acts partially redundantly with the transcription factor mab-3 to coordinate tail tip cell fusion and retraction and thereby regulate male tail tip morphogenesis. This is most likely through the regulation of downstream effectors such as eff-1. May also negatively regulate the expression of other proteins implicated in male tail morphogenesis including nhr-25, vav-1 and arl-1 in tail tip cells. In males, plays a role in the development of ray A-neurons by negatively regulating the activity of the transcription factor ast-1. Plays a role in the male-specific differentiation of PHC sensory neurons into densely connected hub sensory neurons. Plays a role in male mating behavior. This is Doublesex- and mab-3-related transcription factor dmd-3 from Caenorhabditis elegans.